Reading from the N-terminus, the 365-residue chain is Pyridoxal reductase, chloroplastic (365 aa).

The transit peptide at 1 to 15 directs the protein to the chloroplast; it reads MALTLSTTKTFTNIN. The Proton donor role is filled by Tyr94.

The protein belongs to the aldo/keto reductase family. As to quaternary structure, monomer. In terms of tissue distribution, expressed in cotyledons, embryos, flowers, shoots, roots and seeds.

The protein localises to the plastid. It localises to the chloroplast. It catalyses the reaction pyridoxine + NADP(+) = pyridoxal + NADPH + H(+). Its pathway is cofactor degradation; B6 vitamer degradation; pyridoxal from pyridoxine (dehydrogenase route): step 1/1. Catalyzes the reduction of pyridoxal (PL) with NADPH and oxidation of pyridoxine (PN) with NADP(+). Involved in the PLP salvage pathway. The polypeptide is Pyridoxal reductase, chloroplastic (PLR1) (Arabidopsis thaliana (Mouse-ear cress)).